We begin with the raw amino-acid sequence, 359 residues long: tRNA-specific 2-thiouridylase MnmA (359 aa).

Residues 9-16 (GMSGGVDS) and Met35 contribute to the ATP site. Cys105 functions as the Nucleophile in the catalytic mechanism. Residues Cys105 and Cys203 are joined by a disulfide bond. Residue Gly129 coordinates ATP. The segment at 153–155 (KDQ) is interaction with tRNA. Catalysis depends on Cys203, which acts as the Cysteine persulfide intermediate. The interaction with tRNA stretch occupies residues 309-310 (RY).

It belongs to the MnmA/TRMU family.

The protein localises to the cytoplasm. It catalyses the reaction S-sulfanyl-L-cysteinyl-[protein] + uridine(34) in tRNA + AH2 + ATP = 2-thiouridine(34) in tRNA + L-cysteinyl-[protein] + A + AMP + diphosphate + H(+). Its function is as follows. Catalyzes the 2-thiolation of uridine at the wobble position (U34) of tRNA, leading to the formation of s(2)U34. The chain is tRNA-specific 2-thiouridylase MnmA from Acetivibrio thermocellus (strain ATCC 27405 / DSM 1237 / JCM 9322 / NBRC 103400 / NCIMB 10682 / NRRL B-4536 / VPI 7372) (Clostridium thermocellum).